The primary structure comprises 303 residues: Methionyl-tRNA formyltransferase (303 aa).

Residue 108 to 111 (SDLP) coordinates (6S)-5,6,7,8-tetrahydrofolate.

The protein belongs to the Fmt family.

It carries out the reaction L-methionyl-tRNA(fMet) + (6R)-10-formyltetrahydrofolate = N-formyl-L-methionyl-tRNA(fMet) + (6S)-5,6,7,8-tetrahydrofolate + H(+). Its function is as follows. Attaches a formyl group to the free amino group of methionyl-tRNA(fMet). The formyl group appears to play a dual role in the initiator identity of N-formylmethionyl-tRNA by promoting its recognition by IF2 and preventing the misappropriation of this tRNA by the elongation apparatus. The sequence is that of Methionyl-tRNA formyltransferase from Rickettsia canadensis (strain McKiel).